The following is a 235-amino-acid chain: Ribosomal RNA small subunit methyltransferase G (235 aa).

S-adenosyl-L-methionine is bound by residues Gly98, Met103, 149–150 (VE), and Arg164.

This sequence belongs to the methyltransferase superfamily. RNA methyltransferase RsmG family.

The protein resides in the cytoplasm. It catalyses the reaction guanosine(527) in 16S rRNA + S-adenosyl-L-methionine = N(7)-methylguanosine(527) in 16S rRNA + S-adenosyl-L-homocysteine. Specifically methylates the N7 position of guanine in position 527 of 16S rRNA. In Cupriavidus metallidurans (strain ATCC 43123 / DSM 2839 / NBRC 102507 / CH34) (Ralstonia metallidurans), this protein is Ribosomal RNA small subunit methyltransferase G.